The following is a 273-amino-acid chain: MTVLHSIDFFSSSSAPVAIEARAPQSAFPEHHHDFYEIVIVEEGAGVHVFNGNPYTLSRGCVCFVRDHDRHLFESTDDLFLTNVLFRAPDAFRFLSGVGHFLPRECDGVYPSHWRVNGQVLQQIKCLIACLEHAPKSDQVEDIALHESVFMQLLVKLWQGCQTQVGDDQEGRLYQLLDWLQNNYSEAVEWPELADRFALPLRTLHRQLKNKTGMTPQRYLTRLRLLQARHQLCYSDNSVTDIAYLCGFGDSNHFSTLFKREFSQSPRDLRSQL.

The 99-residue stretch at 174 to 272 folds into the HTH araC/xylS-type domain; the sequence is YQLLDWLQNN…SQSPRDLRSQ (99 aa). DNA-binding regions (H-T-H motif) lie at residues 191-212 and 239-262; these read PELA…KNKT and VTDI…KREF.

In terms of assembly, binds DNA as a dimer.

It is found in the cytoplasm. Functionally, activates expression of the rhaBAD and rhaT operons. The protein is HTH-type transcriptional activator RhaS of Yersinia pestis bv. Antiqua (strain Angola).